The chain runs to 476 residues: Serine/threonine-protein kinase PknF (476 aa).

Thr8 and Thr13 each carry phosphothreonine; by autocatalysis. The Protein kinase domain occupies 12–279; it reads FTIVRQLGSG…FARALGHRLG (268 aa). Residues 18 to 26 and Lys41 contribute to the ATP site; that span reads LGSGGMGEV. The active-site Proton acceptor is the Asp137. Phosphothreonine; by autocatalysis occurs at positions 173, 175, and 287. Ser290 bears the Phosphoserine; by autocatalysis mark. Residues 332–376 are disordered; sequence ADDERAAQPARTRTTTSAGTTTSVAPASTTRPAPTTPTTTGAADT. The span at 338 to 376 shows a compositional bias: low complexity; it reads AQPARTRTTTSAGTTTSVAPASTTRPAPTTPTTTGAADT.

This sequence belongs to the protein kinase superfamily. Ser/Thr protein kinase family. Dephosphorylated by PstP.

The enzyme catalyses L-seryl-[protein] + ATP = O-phospho-L-seryl-[protein] + ADP + H(+). It catalyses the reaction L-threonyl-[protein] + ATP = O-phospho-L-threonyl-[protein] + ADP + H(+). This is Serine/threonine-protein kinase PknF (pknF) from Mycobacterium bovis (strain ATCC BAA-935 / AF2122/97).